A 230-amino-acid polypeptide reads, in one-letter code: MEKLTTLTGVGVPLRRSNVDTDQIIPAVFLKRVTKSGFDDALFYAWRRDPNFVLNKPEYAGKGQILVAGPEFGIGSSREHAVWALHDYGFRVVIAPSFADIFYGNTAKNGVLAAIMPQESVELLWKLLEEEPGREMTVSLETRTVTCGDVTLPFEVNDYVRWRLMNGYDDIDLTLQHEDDIAAYEKMRAEKFPFKPKTIPAKHWAEERIESAREPEDADWTGPLADRGII.

It belongs to the LeuD family. LeuD type 1 subfamily. Heterodimer of LeuC and LeuD.

The enzyme catalyses (2R,3S)-3-isopropylmalate = (2S)-2-isopropylmalate. Its pathway is amino-acid biosynthesis; L-leucine biosynthesis; L-leucine from 3-methyl-2-oxobutanoate: step 2/4. Catalyzes the isomerization between 2-isopropylmalate and 3-isopropylmalate, via the formation of 2-isopropylmaleate. This chain is 3-isopropylmalate dehydratase small subunit, found in Bifidobacterium longum (strain DJO10A).